The sequence spans 436 residues: ATP-dependent protease ATPase subunit HslU (436 aa).

Residues Val18, 60–65, Asp249, Glu314, and Arg386 each bind ATP; that span reads GVGKTE.

It belongs to the ClpX chaperone family. HslU subfamily. A double ring-shaped homohexamer of HslV is capped on each side by a ring-shaped HslU homohexamer. The assembly of the HslU/HslV complex is dependent on binding of ATP.

The protein localises to the cytoplasm. ATPase subunit of a proteasome-like degradation complex; this subunit has chaperone activity. The binding of ATP and its subsequent hydrolysis by HslU are essential for unfolding of protein substrates subsequently hydrolyzed by HslV. HslU recognizes the N-terminal part of its protein substrates and unfolds these before they are guided to HslV for hydrolysis. The sequence is that of ATP-dependent protease ATPase subunit HslU from Rhizobium rhizogenes (strain K84 / ATCC BAA-868) (Agrobacterium radiobacter).